The following is a 475-amino-acid chain: Membrane-bound lytic murein transglycosylase F (475 aa).

Residues 1–30 form the signal peptide; that stretch reads MKKLKINYLFIGILTLLLAAALWPSIPWFG. The tract at residues 31 to 269 is non-LT domain; sequence KTENHIAAIQ…RIEEKYLGHG (239 aa). An LT domain region spans residues 270 to 475; it reads DDFDYVDTRS…MKLAQDYPAV (206 aa). E314 is an active-site residue.

It in the N-terminal section; belongs to the bacterial solute-binding protein 3 family. The protein in the C-terminal section; belongs to the transglycosylase Slt family.

Its subcellular location is the cell outer membrane. It catalyses the reaction Exolytic cleavage of the (1-&gt;4)-beta-glycosidic linkage between N-acetylmuramic acid (MurNAc) and N-acetylglucosamine (GlcNAc) residues in peptidoglycan, from either the reducing or the non-reducing ends of the peptidoglycan chains, with concomitant formation of a 1,6-anhydrobond in the MurNAc residue.. Its function is as follows. Murein-degrading enzyme that degrades murein glycan strands and insoluble, high-molecular weight murein sacculi, with the concomitant formation of a 1,6-anhydromuramoyl product. Lytic transglycosylases (LTs) play an integral role in the metabolism of the peptidoglycan (PG) sacculus. Their lytic action creates space within the PG sacculus to allow for its expansion as well as for the insertion of various structures such as secretion systems and flagella. The protein is Membrane-bound lytic murein transglycosylase F of Salmonella typhi.